We begin with the raw amino-acid sequence, 68 residues long: Protein VNG_1110C (68 aa).

This Halobacterium salinarum (strain ATCC 700922 / JCM 11081 / NRC-1) (Halobacterium halobium) protein is Protein VNG_1110C.